Here is a 599-residue protein sequence, read N- to C-terminus: Elongation factor 4 (599 aa).

Residues 5 to 187 form the tr-type G domain; that stretch reads AHIRNFSIVA…AIVKHLPAPK (183 aa). Residues 17–22 and 134–137 contribute to the GTP site; these read DHGKST and NKID.

It belongs to the TRAFAC class translation factor GTPase superfamily. Classic translation factor GTPase family. LepA subfamily.

Its subcellular location is the cell inner membrane. It catalyses the reaction GTP + H2O = GDP + phosphate + H(+). Required for accurate and efficient protein synthesis under certain stress conditions. May act as a fidelity factor of the translation reaction, by catalyzing a one-codon backward translocation of tRNAs on improperly translocated ribosomes. Back-translocation proceeds from a post-translocation (POST) complex to a pre-translocation (PRE) complex, thus giving elongation factor G a second chance to translocate the tRNAs correctly. Binds to ribosomes in a GTP-dependent manner. The sequence is that of Elongation factor 4 from Ruegeria pomeroyi (strain ATCC 700808 / DSM 15171 / DSS-3) (Silicibacter pomeroyi).